Here is an 89-residue protein sequence, read N- to C-terminus: Small ribosomal subunit protein uS15 (89 aa).

It belongs to the universal ribosomal protein uS15 family. In terms of assembly, part of the 30S ribosomal subunit. Forms a bridge to the 50S subunit in the 70S ribosome, contacting the 23S rRNA.

In terms of biological role, one of the primary rRNA binding proteins, it binds directly to 16S rRNA where it helps nucleate assembly of the platform of the 30S subunit by binding and bridging several RNA helices of the 16S rRNA. Forms an intersubunit bridge (bridge B4) with the 23S rRNA of the 50S subunit in the ribosome. This is Small ribosomal subunit protein uS15 from Pseudomonas putida (strain ATCC 700007 / DSM 6899 / JCM 31910 / BCRC 17059 / LMG 24140 / F1).